Here is a 548-residue protein sequence, read N- to C-terminus: Chaperonin GroEL (548 aa).

ATP contacts are provided by residues 30-33 (TLGP), Lys-51, 87-91 (DGTTT), Gly-415, and Asp-495.

This sequence belongs to the chaperonin (HSP60) family. As to quaternary structure, forms a cylinder of 14 subunits composed of two heptameric rings stacked back-to-back. Interacts with the co-chaperonin GroES.

It localises to the cytoplasm. It carries out the reaction ATP + H2O + a folded polypeptide = ADP + phosphate + an unfolded polypeptide.. Its function is as follows. Together with its co-chaperonin GroES, plays an essential role in assisting protein folding. The GroEL-GroES system forms a nano-cage that allows encapsulation of the non-native substrate proteins and provides a physical environment optimized to promote and accelerate protein folding. This is Chaperonin GroEL from Pseudoalteromonas atlantica (strain T6c / ATCC BAA-1087).